Reading from the N-terminus, the 85-residue chain is MKLFLLLVIFASMLNDGLVNADGYIRGSDGCKVSCLWGNDFCDKVCKKSGGSYGYCWTWGLACWCEGLPDNEKWKYESNTCGSKK.

A signal peptide spans 1 to 21 (MKLFLLLVIFASMLNDGLVNA). In terms of domain architecture, LCN-type CS-alpha/beta spans 22 to 82 (DGYIRGSDGC…KWKYESNTCG (61 aa)). Disulfide bonds link C31-C81, C35-C56, C42-C63, and C46-C65.

This sequence belongs to the long (4 C-C) scorpion toxin superfamily. Sodium channel inhibitor family. Beta subfamily. As to expression, expressed by the venom gland.

The protein resides in the secreted. Its function is as follows. Depressant insect beta-toxins cause a transient contraction paralysis followed by a slow flaccid paralysis. They bind voltage-independently at site-4 of sodium channels (Nav) and shift the voltage of activation toward more negative potentials thereby affecting sodium channel activation and promoting spontaneous and repetitive firing. The polypeptide is Toxin BmKITc (Olivierus martensii (Manchurian scorpion)).